A 558-amino-acid chain; its full sequence is Arginine--tRNA ligase (558 aa).

Residues 119–129 carry the 'HIGH' region motif; that stretch reads ANPDGPLHVGH.

The protein belongs to the class-I aminoacyl-tRNA synthetase family.

Its subcellular location is the cytoplasm. The enzyme catalyses tRNA(Arg) + L-arginine + ATP = L-arginyl-tRNA(Arg) + AMP + diphosphate. This chain is Arginine--tRNA ligase, found in Methanothrix thermoacetophila (strain DSM 6194 / JCM 14653 / NBRC 101360 / PT) (Methanosaeta thermophila).